The chain runs to 290 residues: Festuclavine dehydrogenase easG (290 aa).

The protein belongs to the fgaFS/easG family.

The catalysed reaction is festuclavine + NAD(+) = 6,8-dimethyl-6,7-didehydroergoline + NADH + H(+). It participates in alkaloid biosynthesis; ergot alkaloid biosynthesis. Its function is as follows. Festuclavine dehydrogenase; part of the gene cluster that mediates the biosynthesis of fumiclavanine C, a fungal ergot alkaloid. DmaW catalyzes the first step of ergot alkaloid biosynthesis by condensing dimethylallyl diphosphate (DMAP) and tryptophan to form 4-dimethylallyl-L-tryptophan. The second step is catalyzed by the methyltransferase easF that methylates 4-dimethylallyl-L-tryptophan in the presence of S-adenosyl-L-methionine, resulting in the formation of 4-dimethylallyl-L-abrine. The catalase easC and the FAD-dependent oxidoreductase easE then transform 4-dimethylallyl-L-abrine to chanoclavine-I which is further oxidized by EasD in the presence of NAD(+), resulting in the formation of chanoclavine-I aldehyde. EasA reduces chanoclavine-I aldehyde to dihydrochanoclavine-I aldehyde that spontaneously dehydrates to form 6,8-dimethyl-6,7-didehydroergoline. EasG then catalyzes the reduction of 6,8-dimethyl-6,7-didehydroergoline to form festuclavine. Hydrolysis of festuclavine by easM then leads to the formation of fumigaclavine B which is in turn acetylated by easN to fumigaclavine A. Finally, easL catalyzes the conversion of fumigaclavine A into fumigaclavine C by attaching a dimethylallyl moiety to C-2 of the indole nucleus. The polypeptide is Festuclavine dehydrogenase easG (Aspergillus fumigatus (strain ATCC MYA-4609 / CBS 101355 / FGSC A1100 / Af293) (Neosartorya fumigata)).